Consider the following 259-residue polypeptide: (3R)-3-hydroxyacyl-CoA dehydrogenase (259 aa).

Residues 13–21 (LVTGAGSGI) and 40–41 (DL) contribute to the NAD(+) site. Residue serine 58 is modified to Phosphoserine. Lysine 66 bears the N6-acetyllysine mark. 72-74 (ADV) serves as a coordination point for NAD(+). Serine 154 serves as a coordination point for substrate. N6-succinyllysine is present on lysine 158. The active-site Proton acceptor is tyrosine 167. NAD(+) contacts are provided by residues 167–171 (YASSK) and 200–202 (IAT). Lysine 171 carries the N6-succinyllysine modification.

Belongs to the short-chain dehydrogenases/reductases (SDR) family. As to quaternary structure, heterotetramer with CBR4; contains two molecules of HSD17B8 and CBR4. In terms of tissue distribution, expressed in ovary at protein level.

It is found in the mitochondrion matrix. It carries out the reaction a (3R)-3-hydroxyacyl-CoA + NAD(+) = a 3-oxoacyl-CoA + NADH + H(+). The enzyme catalyses 17beta-estradiol + NAD(+) = estrone + NADH + H(+). The catalysed reaction is testosterone + NAD(+) = androst-4-ene-3,17-dione + NADH + H(+). It catalyses the reaction 17beta-hydroxy-5alpha-androstan-3-one + NAD(+) = 5alpha-androstan-3,17-dione + NADH + H(+). Its pathway is steroid biosynthesis; estrogen biosynthesis. The protein operates within lipid metabolism; fatty acid biosynthesis. It functions in the pathway lipid metabolism; mitochondrial fatty acid beta-oxidation. Functionally, required for the solubility and assembly of the heterotetramer 3-ketoacyl-[acyl carrier protein] (ACP) reductase functional complex (KAR or KAR1) that forms part of the mitochondrial fatty acid synthase (mtFAS). Alpha-subunit of the KAR complex that acts as scaffold protein required for the stability of carbonyl reductase type-4 (CBR4, beta-subunit of the KAR complex) and for its 3-ketoacyl-ACP reductase activity, thereby participating in mitochondrial fatty acid biosynthesis. Catalyzes the NAD-dependent conversion of (3R)-3-hydroxyacyl-CoA into 3-ketoacyl-CoA (3-oxoacyl-CoA) with no chain length preference; this enzymatic activity is not needed for the KAR function. Prefers (3R)-3-hydroxyacyl-CoA over (3S)-3-hydroxyacyl-CoA and displays enzymatic activity only in the presence of NAD(+). Cooperates with enoyl-CoA hydratase 1 in mitochondria, together they constitute an alternative route to the auxiliary enzyme pathways for the breakdown of Z-PUFA (cis polyunsaturated fatty acid) enoyl-esters. NAD-dependent 17-beta-hydroxysteroid dehydrogenase with highest activity towards estradiol (17beta-estradiol or E2). Has very low activity towards testosterone and dihydrotestosterone (17beta-hydroxy-5alpha-androstan-3-one). Primarily an oxidative enzyme, it can switch to a reductive mode determined in the appropriate physiologic milieu and catalyze the reduction of estrone (E1) to form biologically active 17beta-estradiol. This Rattus norvegicus (Rat) protein is (3R)-3-hydroxyacyl-CoA dehydrogenase (Hsd17b8).